Consider the following 871-residue polypeptide: Rho guanine nucleotide exchange factor 26 (871 aa).

Disordered regions lie at residues 1–49, 86–233, and 288–310; these read MDGE…LLIT, AQRR…NPSV, and PLGH…SLRR. Ser-22 carries the post-translational modification Phosphoserine. Residues 136–156 are compositionally biased toward pro residues; sequence PAPPPPPVLRPPRTPNAPAPC. A compositionally biased stretch (polar residues) spans 173-192; that stretch reads PTANGLAANNDSPGSGSQSG. The residue at position 392 (Ser-392) is a Phosphoserine. The DH domain occupies 439-623; it reads KRQEAIFEVI…SKLVRLCNEG (185 aa). Residues 655 to 782 enclose the PH domain; sequence WLVKRGELTA…WITALGHSSG (128 aa). Positions 789–850 constitute an SH3 domain; sequence TSLTQVEIVR…PMECAKEITC (62 aa).

As to quaternary structure, interacts with ICAM1 and RHOG. As to expression, isoform 1 is broadly expressed, with highest levels in liver (at protein level). Certain mRNA species appear to be specifically expressed in prostate and liver.

It localises to the cell projection. The protein localises to the ruffle. Functionally, activates RhoG GTPase by promoting the exchange of GDP by GTP. Required for the formation of membrane ruffles during macropinocytosis. Required for the formation of cup-like structures during trans-endothelial migration of leukocytes. In case of Salmonella enterica infection, activated by SopB, which induces cytoskeleton rearrangements and promotes bacterial entry. The polypeptide is Rho guanine nucleotide exchange factor 26 (ARHGEF26) (Homo sapiens (Human)).